A 187-amino-acid chain; its full sequence is BCL2/adenovirus E1B 19 kDa protein-interacting protein 3 (187 aa).

The tract at residues 42–86 (LDAQHESGRSSSKSSHCDSPPRSQTPQDTNRAEIDSHSFGEKNST) is disordered. Residues Ser48, Ser60, Ser77, Ser79, Ser85, and Ser88 each carry the phosphoserine modification. Positions 50-63 (RSSSKSSHCDSPPR) are enriched in low complexity. The segment covering 71–81 (NRAEIDSHSFG) has biased composition (basic and acidic residues). The BH3 signature appears at 93–118 (IERRREVESILKKNSDWIWDWSSRPE). The helical transmembrane segment at 157-177 (VFLPSLLLSHLLAIGLGIYIG) threads the bilayer.

It belongs to the NIP3 family. In terms of assembly, homodimer. Binds to BCL2. Interacts with BNIP3L and ACAA2. Interacts (via BH3 domain) with SPATA18 (via coiled-coil domains). Interacts with BOK; promotes BOK oligomerization. Interacts with PPTC7; this interaction promotes BNIP3 degradation.

The protein resides in the mitochondrion. Its subcellular location is the mitochondrion outer membrane. Functionally, apoptosis-inducing protein that can overcome BCL2 suppression. May play a role in repartitioning calcium between the two major intracellular calcium stores in association with BCL2. Involved in mitochondrial quality control via its interaction with SPATA18/MIEAP: in response to mitochondrial damage, participates in mitochondrial protein catabolic process (also named MALM) leading to the degradation of damaged proteins inside mitochondria. The physical interaction of SPATA18/MIEAP, BNIP3 and BNIP3L/NIX at the mitochondrial outer membrane may play a critical role in the translocation of lysosomal proteins from the cytoplasm to the mitochondrial matrix. The physical interaction of SPATA18/MIEAP, BNIP3 and BNIP3L/NIX at the mitochondrial outer membrane regulates the opening of a pore in the mitochondrial double membrane in order to mediate the translocation of lysosomal proteins from the cytoplasm to the mitochondrial matrix. Plays an important role in the calprotectin (S100A8/A9)-induced cell death pathway. The polypeptide is BCL2/adenovirus E1B 19 kDa protein-interacting protein 3 (Mus musculus (Mouse)).